A 330-amino-acid polypeptide reads, in one-letter code: Sulfate/thiosulfate import ATP-binding protein CysA (330 aa).

The region spanning 3–237 (IEIRNINKQF…PASEFVYHFL (235 aa)) is the ABC transporter domain. ATP is bound at residue 35 to 42 (GPSGCGKT).

It belongs to the ABC transporter superfamily. Sulfate/tungstate importer (TC 3.A.1.6) family. As to quaternary structure, the complex is composed of two ATP-binding proteins (CysA), two transmembrane proteins (CysT and CysW) and a solute-binding protein (CysP).

Its subcellular location is the cell inner membrane. The enzyme catalyses sulfate(out) + ATP + H2O = sulfate(in) + ADP + phosphate + H(+). It catalyses the reaction thiosulfate(out) + ATP + H2O = thiosulfate(in) + ADP + phosphate + H(+). In terms of biological role, part of the ABC transporter complex CysAWTP involved in sulfate/thiosulfate import. Responsible for energy coupling to the transport system. The chain is Sulfate/thiosulfate import ATP-binding protein CysA from Pectobacterium atrosepticum (strain SCRI 1043 / ATCC BAA-672) (Erwinia carotovora subsp. atroseptica).